Consider the following 252-residue polypeptide: Trans-aconitate 2-methyltransferase (252 aa).

Belongs to the methyltransferase superfamily. Tam family.

The protein localises to the cytoplasm. The enzyme catalyses trans-aconitate + S-adenosyl-L-methionine = (E)-3-(methoxycarbonyl)pent-2-enedioate + S-adenosyl-L-homocysteine. Functionally, catalyzes the S-adenosylmethionine monomethyl esterification of trans-aconitate. The polypeptide is Trans-aconitate 2-methyltransferase (Shigella flexneri serotype 5b (strain 8401)).